The chain runs to 305 residues: Glycine--tRNA ligase alpha subunit (305 aa).

Belongs to the class-II aminoacyl-tRNA synthetase family. Tetramer of two alpha and two beta subunits.

The protein resides in the cytoplasm. It carries out the reaction tRNA(Gly) + glycine + ATP = glycyl-tRNA(Gly) + AMP + diphosphate. This Streptococcus pneumoniae (strain ATCC 700669 / Spain 23F-1) protein is Glycine--tRNA ligase alpha subunit.